Consider the following 175-residue polypeptide: Coagulogen (175 aa).

8 cysteine pairs are disulfide-bonded: Cys-8–Cys-167, Cys-10–Cys-95, Cys-60–Cys-161, Cys-65–Cys-121, Cys-75–Cys-168, Cys-88–Cys-140, Cys-127–Cys-170, and Cys-134–Cys-172.

This sequence belongs to the coagulin family. As to quaternary structure, coagulogen is cleaved after Arg-18 and Arg-46 by a clotting enzyme contained in the hemocyte and activated by a bacterial endotoxin (lipopolysaccharide). This cleavage releases the peptide C and leaves 2 chains of coagulin, A and B, linked by two disulfide bonds. Coagulin molecules interlink to form a gel. As to expression, hemolymph.

It localises to the secreted. In terms of biological role, coagulogen is a gel-forming protein of hemolymph; it hinders the spread of invaders by immobilizing them. In Tachypleus gigas (Southeast Asian horseshoe crab), this protein is Coagulogen.